A 298-amino-acid chain; its full sequence is ATP phosphoribosyltransferase (298 aa).

It belongs to the ATP phosphoribosyltransferase family. Long subfamily. Requires Mg(2+) as cofactor.

It localises to the cytoplasm. The catalysed reaction is 1-(5-phospho-beta-D-ribosyl)-ATP + diphosphate = 5-phospho-alpha-D-ribose 1-diphosphate + ATP. It functions in the pathway amino-acid biosynthesis; L-histidine biosynthesis; L-histidine from 5-phospho-alpha-D-ribose 1-diphosphate: step 1/9. With respect to regulation, feedback inhibited by histidine. In terms of biological role, catalyzes the condensation of ATP and 5-phosphoribose 1-diphosphate to form N'-(5'-phosphoribosyl)-ATP (PR-ATP). Has a crucial role in the pathway because the rate of histidine biosynthesis seems to be controlled primarily by regulation of HisG enzymatic activity. The polypeptide is ATP phosphoribosyltransferase (Aliivibrio fischeri (strain ATCC 700601 / ES114) (Vibrio fischeri)).